A 311-amino-acid polypeptide reads, in one-letter code: Syntaxin-111 (311 aa).

Topologically, residues 1–284 (MNDLMTKSFM…AREHQRSSRK (284 aa)) are cytoplasmic. Residues 213-275 (VHEIQDRHDA…QGGNKELRKA (63 aa)) form the t-SNARE coiled-coil homology domain. The helical; Anchor for type IV membrane protein transmembrane segment at 285-305 (WLCIGIIILLLLVLLVIVPIA) threads the bilayer. Residues 306–311 (TSFKRS) are Vesicular-facing.

This sequence belongs to the syntaxin family. Expressed in roots and panicles.

The protein localises to the cell membrane. It is found in the cytoplasm. Its function is as follows. Vesicle trafficking protein that functions in the secretory pathway. This is Syntaxin-111 from Oryza sativa subsp. japonica (Rice).